The primary structure comprises 361 residues: Peptidyl-prolyl cis-trans isomerase CYP40 (361 aa).

The 166-residue stretch at 7–172 (FMDISIGGEL…QDVVIHDCGE (166 aa)) folds into the PPIase cyclophilin-type domain. TPR repeat units lie at residues 212-245 (VDFV…LDIC) and 298-331 (VKAL…EPND).

Belongs to the cyclophilin-type PPIase family. As to expression, expressed at low levels in seedlings, roots, shoots, leaves, stems, inflorescences, flowers and siliques, with highest levels dividing tissues.

The protein resides in the cytoplasm. It carries out the reaction [protein]-peptidylproline (omega=180) = [protein]-peptidylproline (omega=0). With respect to regulation, binds cyclosporin A (CsA). CsA mediates some of its effects via an inhibitory action on PPIase. Its function is as follows. PPIases accelerate the folding of proteins. It catalyzes the cis-trans isomerization of proline imidic peptide bonds in oligopeptides. Involved in promoting the expression of the juvenile phase of vegetative development, and, to a lower extent, in regulating the positioning of floral buds, floral morphogenesis and the expression of HSPs. Collaboratively with RBL and ULT1, influences floral meristem (FM) determinacy in an AGAMOUS and SUPERMAN-dependent manner, thus contributing to the floral developmental homeostasis. The sequence is that of Peptidyl-prolyl cis-trans isomerase CYP40 from Arabidopsis thaliana (Mouse-ear cress).